Reading from the N-terminus, the 236-residue chain is 2-C-methyl-D-erythritol 4-phosphate cytidylyltransferase (236 aa).

It belongs to the IspD/TarI cytidylyltransferase family. IspD subfamily. In terms of assembly, homodimer.

It carries out the reaction 2-C-methyl-D-erythritol 4-phosphate + CTP + H(+) = 4-CDP-2-C-methyl-D-erythritol + diphosphate. It participates in isoprenoid biosynthesis; isopentenyl diphosphate biosynthesis via DXP pathway; isopentenyl diphosphate from 1-deoxy-D-xylulose 5-phosphate: step 2/6. Catalyzes the formation of 4-diphosphocytidyl-2-C-methyl-D-erythritol from CTP and 2-C-methyl-D-erythritol 4-phosphate (MEP). The polypeptide is 2-C-methyl-D-erythritol 4-phosphate cytidylyltransferase (Escherichia coli O127:H6 (strain E2348/69 / EPEC)).